A 333-amino-acid polypeptide reads, in one-letter code: HTH-type transcriptional repressor PurR (333 aa).

The HTH lacI-type domain maps to 2 to 56; the sequence is ATIKDVAKMAGVSTTTVSHVINKTRFVAKETEQQVLQAIKNLNYSPSAVARSLKV. The segment at residues 4–23 is a DNA-binding region (H-T-H motif); the sequence is IKDVAKMAGVSTTTVSHVIN. A DNA-binding region spans residues 48–56; the sequence is SAVARSLKV. 5 residues coordinate hypoxanthine: Tyr73, Lys189, Thr191, Phe220, and Asp274.

As to quaternary structure, homodimer.

Its pathway is purine metabolism; purine nucleotide biosynthesis [regulation]. Functionally, is the main repressor of the genes involved in the de novo synthesis of purine nucleotides, regulating purB, purC, purEK, purF, purHD, purL, purMN and guaBA expression. PurR is allosterically activated to bind its cognate DNA by binding the purine corepressors, hypoxanthine or guanine, thereby effecting transcription repression. This is HTH-type transcriptional repressor PurR from Histophilus somni (strain 129Pt) (Haemophilus somnus).